The primary structure comprises 157 residues: MMDVLMYLFETYIHSDIELTVDQEKLEDELLKAGFHQEAIYKALDWLEDLAHLQETDSHEHIAKSTSTAMRIYTQQEIDGIDTVCRGFLLFLEQIKVLTCETREMVIEQVMTLETEDLSLDDLKWVILMVLFNVPGQESAYTQMEELLYTSDTGMTH.

It belongs to the Smg family.

This chain is Protein Smg homolog, found in Aliivibrio salmonicida (strain LFI1238) (Vibrio salmonicida (strain LFI1238)).